The following is a 770-amino-acid chain: Protein PAT1 homolog 1 (770 aa).

The segment at 1 to 42 (MFRYESLEDCPLDEDEDAFQGLGEEDEEIDQFNDDTFGSGAV) is disordered. The region A; interaction with DDX6/RCK stretch occupies residues 1 to 84 (MFRYESLEDC…EMDLLGDHEE (84 aa)). An involved in nuclear foci localization region spans residues 1-397 (MFRYESLEDC…HRVSHQDHLR (397 aa)). The segment covering 7–33 (LEDCPLDEDEDAFQGLGEEDEEIDQFN) has biased composition (acidic residues). The interval 85 to 388 (NLAERLSKMV…LNGTGDRGGH (304 aa)) is region N; interaction with decapping machinery. Positions 86–95 (LAERLSKMVI) match the Nuclear export signal motif. Ser-177 carries the phosphoserine modification. Thr-178 carries the post-translational modification Phosphothreonine. 2 positions are modified to phosphoserine: Ser-179 and Ser-184. At Thr-194 the chain carries Phosphothreonine. Arg-217, Arg-223, and Arg-263 each carry asymmetric dimethylarginine. Residues 223–397 (RYPAPYGERM…HRVSHQDHLR (175 aa)) are involved in RNA-binding. A Phosphoserine modification is found at Ser-278. Arg-284 is modified (asymmetric dimethylarginine). Disordered stretches follow at residues 320–341 (SAPP…PHLQ) and 369–394 (QLQS…SHQD). Residues 321–337 (APPPATPPPQQHPPGPG) show a composition bias toward pro residues. Residues 369–380 (QLQSRNQHRNLN) are compositionally biased toward low complexity. Arg-385 carries the omega-N-methylarginine modification. Residues 385–394 (RGGHRVSHQD) are compositionally biased toward basic and acidic residues. Residues 389-448 (RVSHQDHLRKDPYANLMLQREKDWVSKIQMMQLQSTDPYLDDFYYQNYFEKLEKSSAAEE) are region H. An involved in nuclear speckle localization region spans residues 398–770 (KDPYANLMLQ…TKLQLVQGMR (373 aa)). The tract at residues 449–770 (MQGDGPKKER…TKLQLVQGMR (322 aa)) is region C.

It belongs to the PAT1 family. In terms of assembly, interacts (via region A) with DDX6/RCK. Interacts (via region H and region C) with LSM1 and LSM4. Interacts (via region N) with DCP1A, DCP2, EDC3, EDC4 and XRN1. Interacts with the CCR4-NOT complex. Interacts with the Lsm-containing SMN-Sm protein complex. Interacts with EIF4ENIF1/4E-T.

The protein localises to the cytoplasm. It localises to the P-body. Its subcellular location is the nucleus. The protein resides in the PML body. It is found in the nucleus speckle. In terms of biological role, RNA-binding protein involved in deadenylation-dependent decapping of mRNAs, leading to the degradation of mRNAs. Acts as a scaffold protein that connects deadenylation and decapping machinery. Required for cytoplasmic mRNA processing body (P-body) assembly. This chain is Protein PAT1 homolog 1 (Patl1), found in Rattus norvegicus (Rat).